Here is a 463-residue protein sequence, read N- to C-terminus: 23S rRNA (uracil(1939)-C(5))-methyltransferase RlmD (463 aa).

In terms of domain architecture, TRAM spans 6 to 76; that stretch reads KSRKPQQPEY…KRLEEAEMVA (71 aa). Residues Cys-90, Cys-96, Cys-99, and Cys-178 each coordinate [4Fe-4S] cluster. Gln-288, Phe-317, Asn-322, Glu-341, Asp-368, and Asp-389 together coordinate S-adenosyl-L-methionine. Residue Cys-415 is the Nucleophile of the active site.

Belongs to the class I-like SAM-binding methyltransferase superfamily. RNA M5U methyltransferase family. RlmD subfamily.

It carries out the reaction uridine(1939) in 23S rRNA + S-adenosyl-L-methionine = 5-methyluridine(1939) in 23S rRNA + S-adenosyl-L-homocysteine + H(+). Catalyzes the formation of 5-methyl-uridine at position 1939 (m5U1939) in 23S rRNA. This chain is 23S rRNA (uracil(1939)-C(5))-methyltransferase RlmD, found in Acinetobacter baumannii (strain ACICU).